A 550-amino-acid polypeptide reads, in one-letter code: Hydroxylamine reductase (550 aa).

Cys3, Cys6, Cys18, and Cys25 together coordinate [2Fe-2S] cluster. His249, Glu273, Cys317, Cys405, Cys433, Cys458, Glu492, and Lys494 together coordinate hybrid [4Fe-2O-2S] cluster. Cys405 bears the Cysteine persulfide mark.

The protein belongs to the HCP family. [2Fe-2S] cluster serves as cofactor. It depends on hybrid [4Fe-2O-2S] cluster as a cofactor.

Its subcellular location is the cytoplasm. The enzyme catalyses A + NH4(+) + H2O = hydroxylamine + AH2 + H(+). Its function is as follows. Catalyzes the reduction of hydroxylamine to form NH(3) and H(2)O. This is Hydroxylamine reductase from Proteus mirabilis (strain HI4320).